The following is a 125-amino-acid chain: Ribosome-binding factor A (125 aa).

The protein belongs to the RbfA family. Monomer. Binds 30S ribosomal subunits, but not 50S ribosomal subunits or 70S ribosomes.

Its subcellular location is the cytoplasm. Its function is as follows. One of several proteins that assist in the late maturation steps of the functional core of the 30S ribosomal subunit. Associates with free 30S ribosomal subunits (but not with 30S subunits that are part of 70S ribosomes or polysomes). Required for efficient processing of 16S rRNA. May interact with the 5'-terminal helix region of 16S rRNA. The polypeptide is Ribosome-binding factor A (Acidovorax sp. (strain JS42)).